We begin with the raw amino-acid sequence, 349 residues long: Anthranilate phosphoribosyltransferase (349 aa).

5-phospho-alpha-D-ribose 1-diphosphate contacts are provided by residues glycine 86, 89–90, threonine 94, 96–99, 114–122, and serine 126; these read GD, NIST, and KHGNKSASG. Glycine 86 is a binding site for anthranilate. Serine 98 is a binding site for Mg(2+). Residue asparagine 117 coordinates anthranilate. Arginine 172 contributes to the anthranilate binding site. Mg(2+) contacts are provided by aspartate 231 and glutamate 232.

Belongs to the anthranilate phosphoribosyltransferase family. As to quaternary structure, homodimer. Mg(2+) serves as cofactor.

The enzyme catalyses N-(5-phospho-beta-D-ribosyl)anthranilate + diphosphate = 5-phospho-alpha-D-ribose 1-diphosphate + anthranilate. It functions in the pathway amino-acid biosynthesis; L-tryptophan biosynthesis; L-tryptophan from chorismate: step 2/5. Functionally, catalyzes the transfer of the phosphoribosyl group of 5-phosphorylribose-1-pyrophosphate (PRPP) to anthranilate to yield N-(5'-phosphoribosyl)-anthranilate (PRA). The polypeptide is Anthranilate phosphoribosyltransferase (Prochlorococcus marinus (strain MIT 9312)).